Here is a 269-residue protein sequence, read N- to C-terminus: MDVDQAAIDEILASAEADTAEGRIDRLEKELDVLKGSVKKLLLDLRETLNNLENPFQNLQNLAEGALAGGASYQPPQIQVVPAQIPEPPKPEPEVEQPETETGPEPEPEAEPELKEVKEDEPPEEDVVRELDESKSAEPIPEVMEEVDLEGDSLQAYSFEKPVKRTTPKTADLITKYDIVTLFNLMEWVKGMLEKYNLDSLTLMLELFESAGYISKDARDFICKIAELVSLNDGFEDMLLELYRLHKLMNPADTSMDSKLLSLILDKRL.

A coiled-coil region spans residues 3–66 (VDQAAIDEIL…QNLQNLAEGA (64 aa)). The tract at residues 83–142 (AQIPEPPKPEPEVEQPETETGPEPEPEAEPELKEVKEDEPPEEDVVRELDESKSAEPIPE) is disordered. Positions 94-111 (EVEQPETETGPEPEPEAE) are enriched in acidic residues. The span at 112–136 (PELKEVKEDEPPEEDVVRELDESKS) shows a compositional bias: basic and acidic residues.

This is an uncharacterized protein from Archaeoglobus fulgidus (strain ATCC 49558 / DSM 4304 / JCM 9628 / NBRC 100126 / VC-16).